We begin with the raw amino-acid sequence, 95 residues long: Small ribosomal subunit protein bS18 (95 aa).

The protein belongs to the bacterial ribosomal protein bS18 family. In terms of assembly, part of the 30S ribosomal subunit. Forms a tight heterodimer with protein bS6.

Binds as a heterodimer with protein bS6 to the central domain of the 16S rRNA, where it helps stabilize the platform of the 30S subunit. This is Small ribosomal subunit protein bS18 from Rickettsia prowazekii (strain Madrid E).